We begin with the raw amino-acid sequence, 701 residues long: Elongation factor G (701 aa).

A tr-type G domain is found at 11 to 287; that stretch reads TKVRNIGIMA…AVIDYLPSPL (277 aa). Residues 20–27, 84–88, and 138–141 contribute to the GTP site; these read AHIDAGKT, DTPGH, and NKMD.

The protein belongs to the TRAFAC class translation factor GTPase superfamily. Classic translation factor GTPase family. EF-G/EF-2 subfamily.

Its subcellular location is the cytoplasm. In terms of biological role, catalyzes the GTP-dependent ribosomal translocation step during translation elongation. During this step, the ribosome changes from the pre-translocational (PRE) to the post-translocational (POST) state as the newly formed A-site-bound peptidyl-tRNA and P-site-bound deacylated tRNA move to the P and E sites, respectively. Catalyzes the coordinated movement of the two tRNA molecules, the mRNA and conformational changes in the ribosome. The polypeptide is Elongation factor G (Mycobacterium marinum (strain ATCC BAA-535 / M)).